We begin with the raw amino-acid sequence, 156 residues long: Small ribosomal subunit protein uS7 (156 aa).

The protein belongs to the universal ribosomal protein uS7 family. In terms of assembly, part of the 30S ribosomal subunit. Contacts proteins S9 and S11.

In terms of biological role, one of the primary rRNA binding proteins, it binds directly to 16S rRNA where it nucleates assembly of the head domain of the 30S subunit. Is located at the subunit interface close to the decoding center, probably blocks exit of the E-site tRNA. This chain is Small ribosomal subunit protein uS7, found in Brucella anthropi (strain ATCC 49188 / DSM 6882 / CCUG 24695 / JCM 21032 / LMG 3331 / NBRC 15819 / NCTC 12168 / Alc 37) (Ochrobactrum anthropi).